Consider the following 565-residue polypeptide: Proline--tRNA ligase (565 aa).

It belongs to the class-II aminoacyl-tRNA synthetase family. ProS type 1 subfamily. As to quaternary structure, homodimer.

The protein localises to the cytoplasm. The catalysed reaction is tRNA(Pro) + L-proline + ATP = L-prolyl-tRNA(Pro) + AMP + diphosphate. Catalyzes the attachment of proline to tRNA(Pro) in a two-step reaction: proline is first activated by ATP to form Pro-AMP and then transferred to the acceptor end of tRNA(Pro). As ProRS can inadvertently accommodate and process non-cognate amino acids such as alanine and cysteine, to avoid such errors it has two additional distinct editing activities against alanine. One activity is designated as 'pretransfer' editing and involves the tRNA(Pro)-independent hydrolysis of activated Ala-AMP. The other activity is designated 'posttransfer' editing and involves deacylation of mischarged Ala-tRNA(Pro). The misacylated Cys-tRNA(Pro) is not edited by ProRS. The chain is Proline--tRNA ligase from Francisella tularensis subsp. tularensis (strain FSC 198).